The sequence spans 634 residues: Threonine--tRNA ligase (634 aa).

Positions Met-1 to Thr-61 constitute a TGS domain. The interval Asp-243–Pro-534 is catalytic. Residues Cys-334, His-385, and His-511 each coordinate Zn(2+).

Belongs to the class-II aminoacyl-tRNA synthetase family. In terms of assembly, homodimer. Zn(2+) serves as cofactor.

The protein resides in the cytoplasm. It carries out the reaction tRNA(Thr) + L-threonine + ATP = L-threonyl-tRNA(Thr) + AMP + diphosphate + H(+). Functionally, catalyzes the attachment of threonine to tRNA(Thr) in a two-step reaction: L-threonine is first activated by ATP to form Thr-AMP and then transferred to the acceptor end of tRNA(Thr). Also edits incorrectly charged L-seryl-tRNA(Thr). In Xanthomonas axonopodis pv. citri (strain 306), this protein is Threonine--tRNA ligase.